The primary structure comprises 227 residues: UPF0173 metal-dependent hydrolase STK_14180 (227 aa).

This sequence belongs to the UPF0173 family.

The chain is UPF0173 metal-dependent hydrolase STK_14180 from Sulfurisphaera tokodaii (strain DSM 16993 / JCM 10545 / NBRC 100140 / 7) (Sulfolobus tokodaii).